The chain runs to 355 residues: Protein RecA (355 aa).

An ATP-binding site is contributed by 65–72 (GPESSGKT).

This sequence belongs to the RecA family.

The protein resides in the cytoplasm. Can catalyze the hydrolysis of ATP in the presence of single-stranded DNA, the ATP-dependent uptake of single-stranded DNA by duplex DNA, and the ATP-dependent hybridization of homologous single-stranded DNAs. It interacts with LexA causing its activation and leading to its autocatalytic cleavage. This Pseudomonas putida (strain W619) protein is Protein RecA.